The primary structure comprises 277 residues: Probable endonuclease 4 (277 aa).

Positions 70, 108, 145, 178, 181, 212, 225, 227, and 257 each coordinate Zn(2+).

Belongs to the AP endonuclease 2 family. The cofactor is Zn(2+).

It carries out the reaction Endonucleolytic cleavage to 5'-phosphooligonucleotide end-products.. In terms of biological role, endonuclease IV plays a role in DNA repair. It cleaves phosphodiester bonds at apurinic or apyrimidinic (AP) sites, generating a 3'-hydroxyl group and a 5'-terminal sugar phosphate. This chain is Probable endonuclease 4, found in Mycoplasmopsis pulmonis (strain UAB CTIP) (Mycoplasma pulmonis).